Here is a 128-residue protein sequence, read N- to C-terminus: Nucleoside diphosphate kinase B (128 aa).

M1 is modified (N-acetylmethionine). K9, F39, T70, R81, and N91 together coordinate ATP. H94 acts as the Pros-phosphohistidine intermediate in catalysis.

Belongs to the NDK family. It depends on Mg(2+) as a cofactor.

The protein resides in the cytoplasm. It is found in the nucleus. Its subcellular location is the cell projection. It localises to the lamellipodium. The protein localises to the ruffle. The catalysed reaction is a 2'-deoxyribonucleoside 5'-diphosphate + ATP = a 2'-deoxyribonucleoside 5'-triphosphate + ADP. It carries out the reaction a ribonucleoside 5'-diphosphate + ATP = a ribonucleoside 5'-triphosphate + ADP. Major role in the synthesis of nucleoside triphosphates other than ATP. In Merluccius bilinearis (Silver hake), this protein is Nucleoside diphosphate kinase B (nme2).